Consider the following 158-residue polypeptide: Regulator of sigma D (158 aa).

Belongs to the Rsd/AlgQ family. In terms of assembly, interacts with RpoD.

It is found in the cytoplasm. In terms of biological role, binds RpoD and negatively regulates RpoD-mediated transcription activation by preventing the interaction between the primary sigma factor RpoD with the catalytic core of the RNA polymerase and with promoter DNA. May be involved in replacement of the RNA polymerase sigma subunit from RpoD to RpoS during the transition from exponential growth to the stationary phase. The protein is Regulator of sigma D of Escherichia fergusonii (strain ATCC 35469 / DSM 13698 / CCUG 18766 / IAM 14443 / JCM 21226 / LMG 7866 / NBRC 102419 / NCTC 12128 / CDC 0568-73).